Reading from the N-terminus, the 737-residue chain is MATPAAVNPSEMGTDLPGPVSMPGAVVGAGQVRMTGAMPGRGGKRRSAGMDFDDEDGEGPSKFSRYDDDQIPGDKERYARENHSEIERRRRNKMTQYITELSDMVPTCSALARKPDKLTILRMAVSHMKSMRGTGNTSTDGAYKPSFLTEQELKHLILEAADGFLFVVAAETGRVIYVSDSVTPVLNHPQSEWFGSTLFEQVHPDDVDKLREQLSTSENSMTGRILDLKTGTVKKEGQQSSMRMCMGSRRSFICRMRCGSAPLDHISLNRLSSMRKRYRNGLGPSKEGEAQYSVVHCTGYIKAWPPAGMTIPDEDTEAGQTSKYCLVAIGRLQVTSSPVSMDMNGLSVPTEFLSRHNSDGIITFVDPRCINVIGYQPQDLLGKDILEFCHPEDQSHLRESFQQVVKLKGQVLSVMYRFRMKNREWMLIRTSSFTFQNPYSDEIEYIICTNTNVKQLQQQQQAELEVHQRDGLTAYDLSQVPVSGVSAGVHESGKTIDKTESLFSQERDPRFSDIYTGISTSEKKMMVPSSTSGGQQLYSQGSPFQPGHSGKSFSSSVIHVPGVNDIQSTAGSAGQNLSQISRQINTGQVSWSGNRPPFSGQQIPAQSNKAQSSPFGIGSSHSYQADPSSYSPLSSPATSSPSGNAYSNLANRNTAFDVSGESSQSGGQFQGRPSEVWSQWQSQHHSQQAGDPHPHTQASQTEVFQDMLPMPGDPTQGTTNYNIEDFADLGMFPPFSE.

The disordered stretch occupies residues 1-73 (MATPAAVNPS…SRYDDDQIPG (73 aa)). Positions 64–73 (SRYDDDQIPG) are enriched in basic and acidic residues. Residues 78–131 (YARENHSEIERRRRNKMTQYITELSDMVPTCSALARKPDKLTILRMAVSHMKSM) enclose the bHLH domain. 2 consecutive PAS domains span residues 149 to 221 (TEQE…ENSM) and 340 to 406 (SMDM…QVVK). The PAC domain occupies 413-456 (SVMYRFRMKNREWMLIRTSSFTFQNPYSDEIEYIICTNTNVKQL). Disordered stretches follow at residues 525–556 (MMVP…FSSS) and 588–721 (QVSW…TTNY). 2 stretches are compositionally biased toward polar residues: residues 528-543 (PSST…QGSP) and 588-626 (QVSW…YQAD). A compositionally biased stretch (low complexity) spans 627–642 (PSSYSPLSSPATSSPS). A compositionally biased stretch (polar residues) spans 643-656 (GNAYSNLANRNTAF). The segment covering 659 to 688 (SGESSQSGGQFQGRPSEVWSQWQSQHHSQQ) has biased composition (low complexity).

As to quaternary structure, efficient DNA binding requires dimerization with another bHLH protein. Heterodimer with the aryl hydrocarbon receptor (AHR), SIM1 or HIF2A/EPAS-1. In terms of tissue distribution, isoform 1 and isoform 2 are most highly expressed in the brain, eye and skeletal muscle and to a lower degree in liver, heart, kidney and swim bladder. Isoform 3 is most highly expressed in the eye, forebrain, midbrain, hindbrain, skeletal muscle, gills and brain but is barely detectable in liver, heart, kidney and swim bladder. Before the pharyngula period isoform 3 is expressed throughout the entire embryo and during this period extensively in the brain and eye.

The protein localises to the nucleus. Functionally, transcription factor that plays a role in the development of the hypothalamo-pituitary axis. Specifically recognizes the xenobiotic response element (XRE). Isoform 1 acts as a transcriptional activator. Isoform 3 acts as a transcriptional repressor. This is Aryl hydrocarbon receptor nuclear translocator 2 from Danio rerio (Zebrafish).